Reading from the N-terminus, the 467-residue chain is Probable protein phosphatase 2C 55 (467 aa).

The 237-residue stretch at 222-458 folds into the PPM-type phosphatase domain; that stretch reads SCYLPHPDKE…DDITVVVSYV (237 aa). Mn(2+) contacts are provided by Asp-252, Gly-253, Asp-383, and Asp-449.

It belongs to the PP2C family. Mg(2+) serves as cofactor. The cofactor is Mn(2+).

It carries out the reaction O-phospho-L-seryl-[protein] + H2O = L-seryl-[protein] + phosphate. It catalyses the reaction O-phospho-L-threonyl-[protein] + H2O = L-threonyl-[protein] + phosphate. In Arabidopsis thaliana (Mouse-ear cress), this protein is Probable protein phosphatase 2C 55.